Consider the following 237-residue polypeptide: Neurogenin-1 (237 aa).

The disordered stretch occupies residues 35–83 (LQQAASASGPPAPARRGAPNISRASEVPGAQDDEQERRRRRGRTRVRSE). Residues 38 to 53 (AASASGPPAPARRGAP) are compositionally biased toward low complexity. Residues 92–144 (SRRVKANDRERNRMHNLNAALDALRSVLPSFPDDTKLTKIETLRFAYNYIWAL) enclose the bHLH domain. The interval 175–209 (GPPSPASDAESWGSGAAAASPLSDPSSPAASEDFT) is disordered. The segment covering 180–207 (ASDAESWGSGAAAASPLSDPSSPAASED) has biased composition (low complexity).

As to quaternary structure, efficient DNA binding requires dimerization with another bHLH protein. As to expression, expression restricted to the embryonic nervous system.

It is found in the nucleus. In terms of biological role, acts as a transcriptional regulator. Involved in the initiation of neuronal differentiation. Activates transcription by binding to the E box (5'-CANNTG-3'). Associates with chromatin to enhancer regulatory elements in genes encoding key transcriptional regulators of neurogenesis. The chain is Neurogenin-1 (NEUROG1) from Homo sapiens (Human).